We begin with the raw amino-acid sequence, 72 residues long: MDATAIHERWSVMSNASIGQEIGVEGLTGLDVDALEISDYVDETLLDGEDLTVTMIASASCTTCICTCSCSS.

Positions 1–55 are excised as a propeptide; the sequence is MDATAIHERWSVMSNASIGQEIGVEGLTGLDVDALEISDYVDETLLDGEDLTVTM. Positions 56–67 form a cross-link, 4-(1-hydroxyethyl)-7-isoleucino-2-(threonin-O3-ylcarbonyl)-7,8-dihydroquinolin-8-ol (Ile-Thr); the sequence is IASASCTTCICT. Ser-58 is subject to 2,3-didehydroalanine (Ser). Residues 60–61 constitute a cross-link (thiazole-4-carboxylic acid (Ser-Cys)); sequence SC. Residues 60–68 constitute a cross-link (5-amino-piperideine-2,5-dicarboxylic acid (Ser-Cys) (with S-69)); the sequence is SCTTCICTC. The 5-amino-piperideine-2,5-dicarboxylic acid (Ser-Ser) (with C-68) cross-link spans 60-69; it reads SCTTCICTCS. The residue at position 63 (Thr-63) is a (Z)-2,3-didehydrobutyrine. The (4S)-thiazoline-4-carboxylic acid (Thr-Cys) cross-link spans 63–64; that stretch reads TC. A (3S,4R)-3,4-dihydroxyisoleucine modification is found at Ile-65. The thiazole-4-carboxylic acid (Ile-Cys) cross-link spans 65-66; the sequence is IC. A cross-link (thiazole-4-carboxylic acid (Thr-Cys)) is located at residues 67–68; sequence TC. The segment at residues 69 to 70 is a cross-link (thiazole-4-carboxylic acid (Ser-Cys)); it reads SC. 2,3-didehydroalanine (Ser) occurs at positions 71 and 72. Position 72 is a serine amide (Ser-72).

This sequence belongs to the thiocillin family. In terms of processing, maturation of thiazole and oxazole containing antibiotics involves the enzymatic condensation of a Cys, Ser or Thr with the alpha-carbonyl of the preceding amino acid to form a thioether or ether bond, then dehydration to form a double bond with the alpha-amino nitrogen. Thiazoline or oxazoline ring are dehydrogenated to form thiazole or oxazole rings. Maturation of pyridinyl containing antibiotics involves the cross-linking of a Ser and a Cys-Ser pair usually separated by 7 or 8 residues along the peptide chain. The Ser residues are dehydrated to didehydroalanines, then bonded between their beta carbons. The alpha carbonyl of the Cys condenses with alpha carbon of the first Ser to form a pyridinyl ring. The ring may be multiply dehydrogenated to form a pyridine ring with loss of the amino nitrogen of the first Ser. Post-translationally, the amidation of Ser-72 probably does not occur by the same mechanism, oxidative cleavage of glycine, as in eukaryotes. In terms of processing, the structure of the 2,3-didehydrobutyrin is shown to be Z-isomer.

It is found in the secreted. Has bacteriocidal activity. Inhibits bacterial protein biosynthesis by acting on the elongation factor Tu (EF-Tu). This Streptomyces azureus protein is Thiostrepton (tpdA).